The following is a 380-amino-acid chain: TPR repeat-containing thioredoxin TDX (380 aa).

V2 carries the N-acetylvaline modification. The span at 49 to 59 (TERDYEDKAET) shows a compositional bias: basic and acidic residues. Residues 49-115 (TERDYEDKAE…DENRDDAQSE (67 aa)) form a disordered region. A compositionally biased stretch (acidic residues) spans 69 to 91 (DDDDDIMESDVELDNSDVVEPDN). Residues 106–115 (DENRDDAQSE) are compositionally biased toward basic and acidic residues. TPR repeat units lie at residues 112-145 (AQSE…NPTS), 147-179 (ILYA…NSDS), and 181-213 (KGYK…DYDE). Residues 240 to 263 (RKEKELQRAERERRKQQEAQEREA) show a composition bias toward basic and acidic residues. A disordered region spans residues 240–265 (RKEKELQRAERERRKQQEAQEREAQA). The 127-residue stretch at 252–378 (RRKQQEAQER…LEQKIAQHSS (127 aa)) folds into the Thioredoxin domain. Catalysis depends on nucleophile residues C304 and C307. The cysteines at positions 304 and 307 are disulfide-linked.

The protein belongs to the thioredoxin family. Oligomerization under high temperature.

Its function is as follows. Thiol-disulfide oxidoreductase that possesses insulin disulfide bonds reducing activity, disulfide reductase, foldase chaperone and holdase chaperone activities. Heat shock causes oligomerization and formation of high molecular weiht (HMW) complexes with concomitant functional switching from a disulfide reductase and foldase chaperone to a holdase chaperone. May interact with HSP70 proteins through the TPR repeats. The sequence is that of TPR repeat-containing thioredoxin TDX (TDX) from Arabidopsis thaliana (Mouse-ear cress).